Here is an 88-residue protein sequence, read N- to C-terminus: Small ribosomal subunit protein bS16 (88 aa).

The protein belongs to the bacterial ribosomal protein bS16 family.

In Baumannia cicadellinicola subsp. Homalodisca coagulata, this protein is Small ribosomal subunit protein bS16.